The primary structure comprises 785 residues: Endonuclease MutS2 (785 aa).

332-339 (GPNTGGKT) is an ATP binding site. One can recognise a Smr domain in the interval 710–785 (IDLRGLDAEE…GDGATIVELK (76 aa)).

Belongs to the DNA mismatch repair MutS family. MutS2 subfamily. Homodimer. Binds to stalled ribosomes, contacting rRNA.

In terms of biological role, endonuclease that is involved in the suppression of homologous recombination and thus may have a key role in the control of bacterial genetic diversity. Its function is as follows. Acts as a ribosome collision sensor, splitting the ribosome into its 2 subunits. Detects stalled/collided 70S ribosomes which it binds and splits by an ATP-hydrolysis driven conformational change. Acts upstream of the ribosome quality control system (RQC), a ribosome-associated complex that mediates the extraction of incompletely synthesized nascent chains from stalled ribosomes and their subsequent degradation. Probably generates substrates for RQC. In Clostridium botulinum (strain Alaska E43 / Type E3), this protein is Endonuclease MutS2.